A 103-amino-acid polypeptide reads, in one-letter code: Large ribosomal subunit protein bL21 (103 aa).

This sequence belongs to the bacterial ribosomal protein bL21 family. As to quaternary structure, part of the 50S ribosomal subunit. Contacts protein L20.

In terms of biological role, this protein binds to 23S rRNA in the presence of protein L20. The chain is Large ribosomal subunit protein bL21 from Mycobacterium sp. (strain JLS).